The following is a 119-amino-acid chain: Beta-2-microglobulin (119 aa).

Residues 1–20 (MARFVVVALLALLSLSGLEA) form the signal peptide. Residues 25–114 (PKIQVYSRHP…VTFPTPKTVK (90 aa)) enclose the Ig-like C1-type domain. A disulfide bond links cysteine 45 and cysteine 100.

Belongs to the beta-2-microglobulin family. In terms of assembly, heterodimer of an alpha chain and a beta chain. Beta-2-microglobulin is the beta-chain of major histocompatibility complex class I molecules.

The protein localises to the secreted. Component of the class I major histocompatibility complex (MHC). Involved in the presentation of peptide antigens to the immune system. This Alouatta seniculus (Red howler monkey) protein is Beta-2-microglobulin (B2M).